The primary structure comprises 1061 residues: Ribonuclease 3 (1061 aa).

Disordered regions lie at residues 1–20 (MDFTEIHKRSRRKKFQQIHQ) and 149–244 (PLHS…SYNE). Residues 156–173 (KTPERKENEEDSDSEIRS) are compositionally biased toward basic and acidic residues. 2 consecutive RNase III domains span residues 586 to 759 (LSVF…LDSG) and 811 to 935 (FHRL…VDKG). Mg(2+) is bound by residues Glu-851, Asp-921, and Glu-924. The DRBM domain maps to 962-1037 (DAKSHLQQWC…AENALAALEK (76 aa)).

Belongs to the ribonuclease III family. Requires Mg(2+) as cofactor. Mn(2+) is required as a cofactor.

Its subcellular location is the nucleus. It carries out the reaction Endonucleolytic cleavage to 5'-phosphomonoester.. Executes the initial step of microRNA (miRNA) processing in the nucleus, that is the cleavage of pri-miRNA to release pre-miRNA. Involved in pre-rRNA processing. Cleaves double-strand RNA and does not cleave single-strand RNA. Involved in fertility. Required for the function or synthesis of the let-7 miRNA. This chain is Ribonuclease 3, found in Caenorhabditis briggsae.